The following is a 297-amino-acid chain: Carboxysome assembly protein CcmO (297 aa).

Residues Met-1–Ser-29 are disordered. A compositionally biased stretch (polar residues) spans Pro-18 to Ser-29. BMC domains lie at Ala-32–Pro-116 and Ser-138–Pro-222.

The protein belongs to the bacterial microcompartments protein family. As to quaternary structure, homooligomerizes, possibly as a trimer, interacts with CcmK in the carboxysome.

The protein localises to the carboxysome. Functionally, required for formation of the carboxysome, a polyhedral inclusion where RuBisCO (ribulose bisphosphate carboxylase, rbcL-rbcS) is sequestered. Required for recruitment of major shell protein CcmK2 to the pre-carboxysome. Suggested to be a carboxysome shell protein. The polypeptide is Carboxysome assembly protein CcmO (Synechocystis sp. (strain ATCC 27184 / PCC 6803 / Kazusa)).